Here is a 276-residue protein sequence, read N- to C-terminus: DnaJ homolog subfamily C member 27-B (276 aa).

GTP-binding positions include 23–30 (GNAEVGKS), 71–75 (DMAGH), and 137–140 (NKID). The region spanning 220-276 (DSWDMLGVKPGATRDEVNKAYRKLAVLLHPDKCVAPGSEDAFKAVVNARTALLKNIK) is the J domain.

Belongs to the small GTPase superfamily. Rab family.

It is found in the nucleus. Its function is as follows. GTPase possibly involved in regulation of the MEK/ERK pathway. This chain is DnaJ homolog subfamily C member 27-B (dnajc27-b), found in Xenopus laevis (African clawed frog).